A 688-amino-acid chain; its full sequence is Lap-Emerin-Man domain protein 2 (688 aa).

Disordered regions lie at residues 62 to 113 (LQKE…IDKP) and 202 to 227 (PQLR…HKRP). Residues 82 to 92 (PKYLYPSSPSK) show a composition bias toward low complexity. Over residues 212–222 (RLQTSATSSPL) the composition is skewed to polar residues. 2 helical membrane passes run 318-338 (YLVH…LALL) and 547-567 (KVFL…INFF). The residue at position 683 (threonine 683) is a Phosphothreonine. Serine 684 is subject to Phosphoserine.

It localises to the nucleus inner membrane. Functionally, nucleus inner membrane protein involved in meiosis. Plays a role in regulating nuclear envelope (NE) morphology and nuclear integrity, particularly during spindle pole body (SPB) extrusion or insertion through the NE, and perhaps during karyokinesis. The polypeptide is Lap-Emerin-Man domain protein 2 (lem2) (Schizosaccharomyces pombe (strain 972 / ATCC 24843) (Fission yeast)).